A 654-amino-acid chain; its full sequence is tRNA 5-methylaminomethyl-2-thiouridine biosynthesis bifunctional protein MnmC (654 aa).

A tRNA (mnm(5)s(2)U34)-methyltransferase region spans residues 1–236; it reads MSTLLQHAQI…KWEVMSGAYV (236 aa). The interval 262–654 is FAD-dependent cmnm(5)s(2)U34 oxidoreductase; sequence IGAGLAGSTT…FALRRLIRGK (393 aa).

In the N-terminal section; belongs to the methyltransferase superfamily. tRNA (mnm(5)s(2)U34)-methyltransferase family. The protein in the C-terminal section; belongs to the DAO family. Requires FAD as cofactor.

Its subcellular location is the cytoplasm. It catalyses the reaction 5-aminomethyl-2-thiouridine(34) in tRNA + S-adenosyl-L-methionine = 5-methylaminomethyl-2-thiouridine(34) in tRNA + S-adenosyl-L-homocysteine + H(+). Catalyzes the last two steps in the biosynthesis of 5-methylaminomethyl-2-thiouridine (mnm(5)s(2)U) at the wobble position (U34) in tRNA. Catalyzes the FAD-dependent demodification of cmnm(5)s(2)U34 to nm(5)s(2)U34, followed by the transfer of a methyl group from S-adenosyl-L-methionine to nm(5)s(2)U34, to form mnm(5)s(2)U34. The protein is tRNA 5-methylaminomethyl-2-thiouridine biosynthesis bifunctional protein MnmC of Pseudomonas putida (strain GB-1).